The primary structure comprises 887 residues: Alanine--tRNA ligase (887 aa).

Residues His-564, His-568, Cys-676, and His-680 each contribute to the Zn(2+) site.

This sequence belongs to the class-II aminoacyl-tRNA synthetase family. Zn(2+) is required as a cofactor.

The protein resides in the cytoplasm. The enzyme catalyses tRNA(Ala) + L-alanine + ATP = L-alanyl-tRNA(Ala) + AMP + diphosphate. Functionally, catalyzes the attachment of alanine to tRNA(Ala) in a two-step reaction: alanine is first activated by ATP to form Ala-AMP and then transferred to the acceptor end of tRNA(Ala). Also edits incorrectly charged Ser-tRNA(Ala) and Gly-tRNA(Ala) via its editing domain. The protein is Alanine--tRNA ligase of Chelativorans sp. (strain BNC1).